We begin with the raw amino-acid sequence, 415 residues long: Ammonium transporter Rh type A (415 aa).

Topologically, residues 1–2 (MR) are cytoplasmic. A helical membrane pass occupies residues 3-23 (FIFPTIAVLLEASMIVLFGFF). Residues 24-51 (VKYETEQNAIQQPNSTNSTKVDRSLELY) lie on the Extracellular side of the membrane. N-linked (GlcNAc...) asparagine glycosylation is found at N37 and N40. A helical membrane pass occupies residues 52 to 72 (PLFQDVHVMIFVGFGFLMTFL). Topologically, residues 73 to 76 (KKYG) are cytoplasmic. The chain crosses the membrane as a helical span at residues 77 to 97 (FSSVGINLLIAALGLQWGTFV). Residues 98–115 (QGMVHRHGQTIYIGIKNM) are Extracellular-facing. The helical transmembrane segment at 116-136 (INADFSTATVLISFGAVLGKI) threads the bilayer. Residues 137–142 (SPTQML) are Cytoplasmic-facing. Residues 143–163 (IMTIIEITVFAGNEYVVGEIF) traverse the membrane as a helical segment. Over 164-167 (QASD) the chain is Extracellular. The chain crosses the membrane as a helical span at residues 168 to 188 (IGASMTIHAFGAYFGLAVAGV). Residues 189-208 (LYRTGLRKGHEKEESEYHSD) are Cytoplasmic-facing. A helical membrane pass occupies residues 209 to 229 (LFAMIGTLFLWMFWPSFNSAI). At 230–236 (AETAEEQ) the chain is on the extracellular side. Residues 237 to 257 (YLAIINTYLSLVACVLTAYAM) form a helical membrane-spanning segment. Over 258–268 (SSLVGHRGKLD) the chain is Cytoplasmic. A helical membrane pass occupies residues 269-287 (MVHIQNATLAGGVAVGTCA). Residues 288 to 290 (DMK) lie on the Extracellular side of the membrane. The chain crosses the membrane as a helical span at residues 291 to 311 (IHPYGSLIIGSIAGMVSVLGF). Residues 312–332 (RFLTPCLTAKLRIHDTCGVHN) are Cytoplasmic-facing. A helical membrane pass occupies residues 333-353 (LHGLPGVVGGLSSIVAILLGV). Over 354–363 (STASSMTMQA) the chain is Extracellular. A helical membrane pass occupies residues 364-384 (AALGSSIGSAIAGGLITGLIL). Topologically, residues 385 to 415 (RFIVRGQPSKDNFFDDSVYWEVPKEKELDNV) are cytoplasmic.

This sequence belongs to the ammonium transporter (TC 2.A.49) family. Rh subfamily. In terms of assembly, homodimer. Heterotrimer; a RHCE monomer interacts with a RHAG homodimer. Component of the ankyrin-1 complex in the erythrocyte, composed of ANK1, RHCE, RHAG, SLC4A1, EPB42, GYPA, GYPB and AQP1. Interacts with GYPB (via the N-terminal); this interaction bridges the (RHAG)2(RHCE) heterotrimer with the SLC4A1 Band 3 I dimer complexed with GYPA. In terms of processing, glycosylated.

It localises to the membrane. It catalyses the reaction methylamine(out) = methylamine(in). The enzyme catalyses NH4(+)(in) = NH4(+)(out). It carries out the reaction CO2(out) = CO2(in). Functionally, component of the ankyrin-1 complex, a multiprotein complex involved in the stability and shape of the erythrocyte membrane. Heterotrimer with RHCE (RHAG)2(RHCE), that transports ammonium and its related derivative methylammonium, in both neutral and ionic forms, across the erythrocyte membrane. The transport of NH4(+) is electrogenic and masks the NH3 transport. Also, may act as a CO2 channel. Moreover in erythrocyte, regulates RHD membrane expression and is associated with rhesus blood group antigen expression. This Canis lupus familiaris (Dog) protein is Ammonium transporter Rh type A.